The primary structure comprises 36 residues: Dermonecrotic toxin LgSicTox-beta-LOXN1/LOXN7 (36 aa).

The protein belongs to the arthropod phospholipase D family. Class II subfamily. It depends on Mg(2+) as a cofactor. In terms of processing, contains 2 disulfide bonds. In terms of tissue distribution, expressed by the venom gland.

Its subcellular location is the secreted. The enzyme catalyses an N-(acyl)-sphingosylphosphocholine = an N-(acyl)-sphingosyl-1,3-cyclic phosphate + choline. The catalysed reaction is an N-(acyl)-sphingosylphosphoethanolamine = an N-(acyl)-sphingosyl-1,3-cyclic phosphate + ethanolamine. It catalyses the reaction a 1-acyl-sn-glycero-3-phosphocholine = a 1-acyl-sn-glycero-2,3-cyclic phosphate + choline. It carries out the reaction a 1-acyl-sn-glycero-3-phosphoethanolamine = a 1-acyl-sn-glycero-2,3-cyclic phosphate + ethanolamine. Functionally, dermonecrotic toxins cleave the phosphodiester linkage between the phosphate and headgroup of certain phospholipids (sphingolipid and lysolipid substrates), forming an alcohol (often choline) and a cyclic phosphate. This toxin acts on sphingomyelin (SM). It may also act on ceramide phosphoethanolamine (CPE), lysophosphatidylcholine (LPC) and lysophosphatidylethanolamine (LPE), but not on lysophosphatidylserine (LPS), and lysophosphatidylglycerol (LPG). It acts by transphosphatidylation, releasing exclusively cyclic phosphate products as second products. Induces dermonecrosis, hemolysis, increased vascular permeability, edema, inflammatory response, and platelet aggregation. The chain is Dermonecrotic toxin LgSicTox-beta-LOXN1/LOXN7 from Loxosceles gaucho (Spider).